The primary structure comprises 508 residues: Cobyric acid synthase (508 aa).

A GATase cobBQ-type domain is found at 249-451 (EVDVAIINLP…IHGIFENSLF (203 aa)). Cys-330 acts as the Nucleophile in catalysis. The active site involves His-443.

Belongs to the CobB/CobQ family. CobQ subfamily.

The protein operates within cofactor biosynthesis; adenosylcobalamin biosynthesis. Its function is as follows. Catalyzes amidations at positions B, D, E, and G on adenosylcobyrinic A,C-diamide. NH(2) groups are provided by glutamine, and one molecule of ATP is hydrogenolyzed for each amidation. The protein is Cobyric acid synthase of Caldanaerobacter subterraneus subsp. tengcongensis (strain DSM 15242 / JCM 11007 / NBRC 100824 / MB4) (Thermoanaerobacter tengcongensis).